We begin with the raw amino-acid sequence, 1001 residues long: Ribonuclease E/G-like protein, chloroplastic (1001 aa).

A chloroplast-targeting transit peptide spans 1–48; that stretch reads MDVTEVPWRRLPQFSVSSRASWLVSSGFPLSSYMFSHVERGKTFRLTL. Residues 76 to 185 enclose the CBM20 domain; it reads SRLKGLCEVV…KIIIRDSWMS (110 aa). Aspartate 755 lines the Mg(2+) pocket. Residues 769 to 789 adopt a coiled-coil conformation; the sequence is QEKAILEVNLAAARQIAREIR. Aspartate 800 lines the Mg(2+) pocket. Positions 858 and 861 each coordinate Zn(2+).

It belongs to the RNase E/G family. As to quaternary structure, part of a chloroplastic degradosome-like complex. Interacts with RHON1. A homotetramer formed by a dimer of dimers. Mg(2+) is required as a cofactor. The cofactor is Zn(2+). As to expression, expressed in cotyledons, rosette and cauline leaves.

It localises to the plastid. Its subcellular location is the chloroplast stroma. In terms of biological role, involved in intercistronic processing of primary transcripts from chloroplast operons. The endonucleolytic activity of the enzyme depends on the number of phosphates at the 5' end, is inhibited by structured RNA, and preferentially cleaves A/U-rich sequences. The protein is Ribonuclease E/G-like protein, chloroplastic (RNE) of Arabidopsis thaliana (Mouse-ear cress).